The primary structure comprises 1091 residues: Error-prone DNA polymerase 1 (1091 aa).

Basic and acidic residues predominate over residues 1051 to 1064; that stretch reads RGDEFHHGMPDDHR. The disordered stretch occupies residues 1051–1080; the sequence is RGDEFHHGMPDDHRAIRKRPPPSNHDDDEV.

It belongs to the DNA polymerase type-C family. DnaE2 subfamily.

The protein localises to the cytoplasm. It catalyses the reaction DNA(n) + a 2'-deoxyribonucleoside 5'-triphosphate = DNA(n+1) + diphosphate. Functionally, DNA polymerase involved in damage-induced mutagenesis and translesion synthesis (TLS). It is not the major replicative DNA polymerase. The sequence is that of Error-prone DNA polymerase 1 from Agrobacterium fabrum (strain C58 / ATCC 33970) (Agrobacterium tumefaciens (strain C58)).